A 295-amino-acid chain; its full sequence is N-acetylmuramic acid 6-phosphate etherase (295 aa).

Positions 53–216 constitute an SIS domain; the sequence is TTEQFKQGGR…STITMVGVGK (164 aa). Residue Glu-81 is the Proton donor of the active site. Glu-112 is an active-site residue.

It belongs to the GCKR-like family. MurNAc-6-P etherase subfamily. In terms of assembly, homodimer.

It carries out the reaction N-acetyl-D-muramate 6-phosphate + H2O = N-acetyl-D-glucosamine 6-phosphate + (R)-lactate. The protein operates within amino-sugar metabolism; N-acetylmuramate degradation. Functionally, specifically catalyzes the cleavage of the D-lactyl ether substituent of MurNAc 6-phosphate, producing GlcNAc 6-phosphate and D-lactate. This is N-acetylmuramic acid 6-phosphate etherase from Staphylococcus saprophyticus subsp. saprophyticus (strain ATCC 15305 / DSM 20229 / NCIMB 8711 / NCTC 7292 / S-41).